The following is a 1058-amino-acid chain: Ubiquitin-like modifier-activating enzyme 1 (1058 aa).

The segment at 1-47 (MSSSPLSKKRRVSGPDPKPGSNCSPAQSVLSEVPSVPTNGMAKNGSE) is disordered. Ser-2 carries the post-translational modification N-acetylserine. Ser-2 bears the N-acetylalanine mark. Ser-4 is subject to Phosphoserine. Residues 5–11 (PLSKKRR) carry the Nuclear localization signal motif. Residues Ser-13, Ser-21, Ser-24, and Ser-46 each carry the phosphoserine modification. Polar residues predominate over residues 21–30 (SNCSPAQSVL). Residue Tyr-55 is modified to Phosphotyrosine. Tandem repeats lie at residues 63–199 (GHEA…GQLF) and 459–611 (GSDL…QVVI). Residues 63–611 (GHEAMKRLQT…GTKGNVQVVI (549 aa)) are 2 approximate repeats. Residues Ala-478, Asp-504, Arg-515, Lys-528, and 576–577 (DN) contribute to the ATP site. Lys-528 bears the N6-succinyllysine mark. Cys-632 acts as the Glycyl thioester intermediate in catalysis. Lys-671 carries the N6-acetyllysine modification. Thr-800 carries the phosphothreonine modification. Ser-810, Ser-816, Ser-820, and Ser-835 each carry phosphoserine. Lys-980 carries the post-translational modification N6-acetyllysine.

It belongs to the ubiquitin-activating E1 family. In terms of assembly, monomer. Interacts with GAN (via BTB domain). Post-translationally, ISGylated. Detected in erythrocytes (at protein level). Ubiquitous.

It is found in the cytoplasm. It localises to the mitochondrion. The protein resides in the nucleus. It carries out the reaction ATP + ubiquitin + [E1 ubiquitin-activating enzyme]-L-cysteine = AMP + diphosphate + S-ubiquitinyl-[E1 ubiquitin-activating enzyme]-L-cysteine.. Its pathway is protein modification; protein ubiquitination. Catalyzes the first step in ubiquitin conjugation to mark cellular proteins for degradation through the ubiquitin-proteasome system. Activates ubiquitin by first adenylating its C-terminal glycine residue with ATP, and thereafter linking this residue to the side chain of a cysteine residue in E1, yielding a ubiquitin-E1 thioester and free AMP. Essential for the formation of radiation-induced foci, timely DNA repair and for response to replication stress. Promotes the recruitment of TP53BP1 and BRCA1 at DNA damage sites. In Homo sapiens (Human), this protein is Ubiquitin-like modifier-activating enzyme 1 (UBA1).